A 206-amino-acid polypeptide reads, in one-letter code: Imidazole glycerol phosphate synthase subunit HisH (206 aa).

Residues 1–206 (MIVIIDYGMG…LRILKNFGDM (206 aa)) enclose the Glutamine amidotransferase type-1 domain. Cysteine 79 (nucleophile) is an active-site residue. Residues histidine 188 and glutamate 190 contribute to the active site.

In terms of assembly, heterodimer of HisH and HisF.

Its subcellular location is the cytoplasm. The enzyme catalyses 5-[(5-phospho-1-deoxy-D-ribulos-1-ylimino)methylamino]-1-(5-phospho-beta-D-ribosyl)imidazole-4-carboxamide + L-glutamine = D-erythro-1-(imidazol-4-yl)glycerol 3-phosphate + 5-amino-1-(5-phospho-beta-D-ribosyl)imidazole-4-carboxamide + L-glutamate + H(+). It catalyses the reaction L-glutamine + H2O = L-glutamate + NH4(+). It functions in the pathway amino-acid biosynthesis; L-histidine biosynthesis; L-histidine from 5-phospho-alpha-D-ribose 1-diphosphate: step 5/9. IGPS catalyzes the conversion of PRFAR and glutamine to IGP, AICAR and glutamate. The HisH subunit catalyzes the hydrolysis of glutamine to glutamate and ammonia as part of the synthesis of IGP and AICAR. The resulting ammonia molecule is channeled to the active site of HisF. The protein is Imidazole glycerol phosphate synthase subunit HisH of Syntrophotalea carbinolica (strain DSM 2380 / NBRC 103641 / GraBd1) (Pelobacter carbinolicus).